The primary structure comprises 579 residues: Probable methyl-accepting chemotaxis protein BT9727_0355 (579 aa).

Over 1–13 the chain is Cytoplasmic; sequence MKKYWHKLSFLQK. A helical membrane pass occupies residues 14–34; that stretch reads NVLLTVLVILTLVGTMGALSF. Topologically, residues 35–198 are extracellular; that stretch reads NMFQNSMMSI…ASIVPSTKEK (164 aa). A helical membrane pass occupies residues 199-219; that stretch reads FIIQGLMFICISVLIATVIQF. The Cytoplasmic portion of the chain corresponds to 220-579; sequence LIVRNALAPL…LQELIGEFKS (360 aa). Residues 223–274 form the HAMP domain; sequence RNALAPLRDLREGLRRVGEGDLNIKLEERSDDIGIINSYFNNTIEKFKGIID. A Glutamate methyl ester (Glu) modification is found at E289. One can recognise a Methyl-accepting transducer domain in the interval 293–529; it reads STKENSMAVQ…NIVRVVNELS (237 aa). E548 is subject to Glutamate methyl ester (Glu).

Belongs to the methyl-accepting chemotaxis (MCP) protein family.

The protein localises to the cell membrane. Functionally, chemotactic-signal transducers respond to changes in the concentration of attractants and repellents in the environment, transduce a signal from the outside to the inside of the cell, and facilitate sensory adaptation through the variation of the level of methylation. This Bacillus thuringiensis subsp. konkukian (strain 97-27) protein is Probable methyl-accepting chemotaxis protein BT9727_0355.